The sequence spans 250 residues: tRNA (guanine-N(1)-)-methyltransferase (250 aa).

S-adenosyl-L-methionine is bound by residues Gly-113 and 133–138 (IGDYVL).

This sequence belongs to the RNA methyltransferase TrmD family. Homodimer.

Its subcellular location is the cytoplasm. It catalyses the reaction guanosine(37) in tRNA + S-adenosyl-L-methionine = N(1)-methylguanosine(37) in tRNA + S-adenosyl-L-homocysteine + H(+). Its function is as follows. Specifically methylates guanosine-37 in various tRNAs. The chain is tRNA (guanine-N(1)-)-methyltransferase from Shewanella amazonensis (strain ATCC BAA-1098 / SB2B).